The following is a 131-amino-acid chain: Putative superoxide reductase (131 aa).

Glutamate 15, histidine 17, histidine 45, histidine 51, cysteine 115, and histidine 118 together coordinate Fe cation.

The protein belongs to the desulfoferrodoxin family. Fe cation serves as cofactor.

It carries out the reaction reduced [rubredoxin] + superoxide + 2 H(+) = oxidized [rubredoxin] + H2O2. Uses electrons from reduced NADP, by way of rubredoxin and an oxidoreductase, to catalyze the reduction of superoxide to hydrogen peroxide. The chain is Putative superoxide reductase from Thermotoga maritima (strain ATCC 43589 / DSM 3109 / JCM 10099 / NBRC 100826 / MSB8).